Consider the following 447-residue polypeptide: Acidic leucine-rich nuclear phosphoprotein 32-related protein (447 aa).

LRR repeat units follow at residues 49-70 (NLQH…PRLG), 71-90 (NLQK…EFLV), and 96-117 (SFCD…APLA). The LRRCT domain occupies 129–167 (CPVTRLKDYRSRVFGLIKTLKYLDKTDAEGNERPESDDE). Positions 155–447 (DAEGNERPES…EDDDDDDEER (293 aa)) are disordered. Acidic residues-rich tracts occupy residues 163 to 194 (ESDD…EIDG) and 215 to 231 (VDVD…DESE). Polar residues predominate over residues 232–242 (QATGVNGTSYR). Acidic residues-rich tracts occupy residues 256–277 (VRED…DNDV), 284–309 (EDSE…EEVD), 336–374 (GDDD…EESG), 397–415 (PINE…DDLP), and 433–447 (DDDD…DEER).

Belongs to the ANP32 family.

The sequence is that of Acidic leucine-rich nuclear phosphoprotein 32-related protein from Arabidopsis thaliana (Mouse-ear cress).